Reading from the N-terminus, the 136-residue chain is Small nuclear ribonucleoprotein Sm D3 (136 aa).

The 73-residue stretch at valine 6–leucine 78 folds into the Sm domain. A disordered region spans residues glycine 98–glycine 136.

This sequence belongs to the snRNP core protein family.

It is found in the nucleus. The protein resides in the cytoplasm. The protein localises to the cytosol. Functionally, plays a role in pre-mRNA splicing as a core component of the spliceosomal U1, U2, U4 and U5 small nuclear ribonucleoproteins (snRNPs), the building blocks of the spliceosome. The protein is Small nuclear ribonucleoprotein Sm D3 (snr-1) of Caenorhabditis elegans.